We begin with the raw amino-acid sequence, 1057 residues long: Carbamoyl phosphate synthase large chain (1057 aa).

The tract at residues 1–401 (MPKRQDIETI…SLLKAIRSLE (401 aa)) is carboxyphosphate synthetic domain. Residues Arg129, Arg169, Gly175, Gly176, Lys208, Ile210, Glu215, Gly241, Ile242, His243, Gln284, and Glu298 each contribute to the ATP site. The ATP-grasp 1 domain occupies 133–327 (RTLMNDLGVP…IAKLAAKIAI (195 aa)). Mg(2+)-binding residues include Gln284, Glu298, and Asn300. 3 residues coordinate Mn(2+): Gln284, Glu298, and Asn300. The tract at residues 402–546 (YGVHHLGLPN…YGTYEYENES (145 aa)) is oligomerization domain. The segment at 547–929 (VVTEKEKILV…ALFKGLTASG (383 aa)) is carbamoyl phosphate synthetic domain. The ATP-grasp 2 domain maps to 671–861 (EALLHTIDVP…MAQLAMRAII (191 aa)). ATP-binding residues include Arg707, Arg746, Leu748, Glu752, Gly777, Val778, His779, Ser780, Gln820, and Glu832. Gln820, Glu832, and Asn834 together coordinate Mg(2+). Mn(2+) is bound by residues Gln820, Glu832, and Asn834. Residues 930–1057 (MEVKDHGTVL…ESMTFTMKNM (128 aa)) enclose the MGS-like domain. Residues 930–1057 (MEVKDHGTVL…ESMTFTMKNM (128 aa)) are allosteric domain.

This sequence belongs to the CarB family. Composed of two chains; the small (or glutamine) chain promotes the hydrolysis of glutamine to ammonia, which is used by the large (or ammonia) chain to synthesize carbamoyl phosphate. Tetramer of heterodimers (alpha,beta)4. It depends on Mg(2+) as a cofactor. Mn(2+) is required as a cofactor.

The enzyme catalyses hydrogencarbonate + L-glutamine + 2 ATP + H2O = carbamoyl phosphate + L-glutamate + 2 ADP + phosphate + 2 H(+). The catalysed reaction is hydrogencarbonate + NH4(+) + 2 ATP = carbamoyl phosphate + 2 ADP + phosphate + 2 H(+). It participates in amino-acid biosynthesis; L-arginine biosynthesis; carbamoyl phosphate from bicarbonate: step 1/1. It functions in the pathway pyrimidine metabolism; UMP biosynthesis via de novo pathway; (S)-dihydroorotate from bicarbonate: step 1/3. Functionally, large subunit of the glutamine-dependent carbamoyl phosphate synthetase (CPSase). CPSase catalyzes the formation of carbamoyl phosphate from the ammonia moiety of glutamine, carbonate, and phosphate donated by ATP, constituting the first step of 2 biosynthetic pathways, one leading to arginine and/or urea and the other to pyrimidine nucleotides. The large subunit (synthetase) binds the substrates ammonia (free or transferred from glutamine from the small subunit), hydrogencarbonate and ATP and carries out an ATP-coupled ligase reaction, activating hydrogencarbonate by forming carboxy phosphate which reacts with ammonia to form carbamoyl phosphate. The sequence is that of Carbamoyl phosphate synthase large chain from Staphylococcus saprophyticus subsp. saprophyticus (strain ATCC 15305 / DSM 20229 / NCIMB 8711 / NCTC 7292 / S-41).